A 599-amino-acid polypeptide reads, in one-letter code: MALKRVFLLRSVAPRVAALSTKPQAQEQPPASPEALRGCGAAKAVRPPVPAVDFTNTQEAYRSRRSWELVRNLLVLRLCASPVLLAHHEQLFQVARKLLGQRMFERLMKMTFYGHFVAGEDQESIRPLIRHNKAFGVGFILDYGVEEDLSPEEAERKEMESCTSEAERDGSGANKREKQYQVHPAFGDRRDGVISARTYFYANEAKCDNYMENLLQCIKASGGASDGGFSAIKLTALGRPQFLLQFSDVLTRWRRFFHQMAAEQGQAGRAAVDTKLEVAVLQDSIAKMGIASRAEIEGWFTPETLGVSGTVDLLDWNSLIDSRTRLSRHLVVPNVQTGQLEPLLSRFTEEEEQQMKRMLQRMDVLAKKAKEAGVRLMIDAEQSYFQPAISRLTLEMQRRFNVDKPFIFNTFQCYLKDAYDNVTLDMELARREGWCFGAKLVRGAYMAQERVRAAEIGYEDPINPTYEATNAMYHRCLNYVLEELKHSTKAEVMVASHNEDTVHFTLCRMKEIGLHPADGQVCFGQLLGMCDQISFPLGQAGFPVYKYVPYGPVMEVLPYLSRRALENSSIMKGAQRERQLLWQELRRRLRTGSLFHHPA.

Disordered regions lie at residues 20-39 and 152-180; these read STKP…LRGC and EEAE…EKQY. Residues 23-39 show a composition bias toward low complexity; the sequence is PQAQEQPPASPEALRGC. The span at 153-180 shows a compositional bias: basic and acidic residues; that stretch reads EAERKEMESCTSEAERDGSGANKREKQY. An N6-acetyllysine mark is found at Lys-356, Lys-367, and Lys-485.

It belongs to the proline oxidase family. FAD serves as cofactor. In terms of tissue distribution, expressed in liver, kidney, heart and to a lesser extent in brain, lung and muscle.

Its subcellular location is the mitochondrion matrix. The enzyme catalyses L-proline + a quinone = (S)-1-pyrroline-5-carboxylate + a quinol + H(+). It participates in amino-acid degradation; L-proline degradation into L-glutamate; L-glutamate from L-proline: step 1/2. Functionally, converts proline to delta-1-pyrroline-5-carboxylate. In Mus musculus (Mouse), this protein is Proline dehydrogenase 1, mitochondrial (Prodh).